The following is a 292-amino-acid chain: Elongation factor Ts (292 aa).

The tract at residues 82–85 (TDFV) is involved in Mg(2+) ion dislocation from EF-Tu.

It belongs to the EF-Ts family.

It localises to the cytoplasm. Functionally, associates with the EF-Tu.GDP complex and induces the exchange of GDP to GTP. It remains bound to the aminoacyl-tRNA.EF-Tu.GTP complex up to the GTP hydrolysis stage on the ribosome. The polypeptide is Elongation factor Ts (Legionella pneumophila (strain Paris)).